We begin with the raw amino-acid sequence, 247 residues long: ATP synthase subunit a, chloroplastic (247 aa).

The next 5 membrane-spanning stretches (helical) occupy residues 38-58 (QVLI…TLAV), 95-115 (VPFI…GALL), 134-154 (INTT…AGLS), 199-219 (LVVV…VMFL), and 220-240 (GLFT…AYIG).

Belongs to the ATPase A chain family. F-type ATPases have 2 components, CF(1) - the catalytic core - and CF(0) - the membrane proton channel. CF(1) has five subunits: alpha(3), beta(3), gamma(1), delta(1), epsilon(1). CF(0) has four main subunits: a, b, b' and c.

It is found in the plastid. Its subcellular location is the chloroplast thylakoid membrane. Its function is as follows. Key component of the proton channel; it plays a direct role in the translocation of protons across the membrane. This Lactuca sativa (Garden lettuce) protein is ATP synthase subunit a, chloroplastic.